The sequence spans 556 residues: Zinc finger protein 18 (556 aa).

The SCAN box domain maps to 41 to 123 (RQLFRQFRYQ…TLVESLKGEP (83 aa)). The disordered stretch occupies residues 169–195 (QDLPLQNSSSATGELLSHGVKEESDME). The KRAB domain occupies 218–291 (ELGTAVLPPL…HLHGAEKMAR (74 aa)). 5 C2H2-type zinc fingers span residues 415-437 (PTCR…QRTH), 443-465 (FHCH…QRTH), 471-493 (CKCD…EKIH), 499-521 (YKCP…QRVH), and 527-549 (YKCT…QRSH).

This sequence belongs to the krueppel C2H2-type zinc-finger protein family.

It is found in the nucleus. In terms of biological role, may be involved in transcriptional regulation. This is Zinc finger protein 18 (Znf18) from Mus musculus (Mouse).